The sequence spans 388 residues: Chorismate synthase (388 aa).

The NADP(+) site is built by Arg-39 and Arg-45. Residues 130-132, 251-252, Ala-296, 311-315, and Arg-337 each bind FMN; these read RSS, NA, and KPIPT.

This sequence belongs to the chorismate synthase family. As to quaternary structure, homotetramer. FMNH2 serves as cofactor.

It carries out the reaction 5-O-(1-carboxyvinyl)-3-phosphoshikimate = chorismate + phosphate. Its pathway is metabolic intermediate biosynthesis; chorismate biosynthesis; chorismate from D-erythrose 4-phosphate and phosphoenolpyruvate: step 7/7. Functionally, catalyzes the anti-1,4-elimination of the C-3 phosphate and the C-6 proR hydrogen from 5-enolpyruvylshikimate-3-phosphate (EPSP) to yield chorismate, which is the branch point compound that serves as the starting substrate for the three terminal pathways of aromatic amino acid biosynthesis. This reaction introduces a second double bond into the aromatic ring system. This Streptococcus equi subsp. zooepidemicus (strain MGCS10565) protein is Chorismate synthase.